A 319-amino-acid polypeptide reads, in one-letter code: Acetyl-coenzyme A carboxylase carboxyl transferase subunit alpha (319 aa).

A CoA carboxyltransferase C-terminal domain is found at 38 to 292; it reads ALDKKAETLL…GKAIEMMLKE (255 aa).

Belongs to the AccA family. In terms of assembly, acetyl-CoA carboxylase is a heterohexamer composed of biotin carboxyl carrier protein (AccB), biotin carboxylase (AccC) and two subunits each of ACCase subunit alpha (AccA) and ACCase subunit beta (AccD).

It is found in the cytoplasm. The enzyme catalyses N(6)-carboxybiotinyl-L-lysyl-[protein] + acetyl-CoA = N(6)-biotinyl-L-lysyl-[protein] + malonyl-CoA. The protein operates within lipid metabolism; malonyl-CoA biosynthesis; malonyl-CoA from acetyl-CoA: step 1/1. In terms of biological role, component of the acetyl coenzyme A carboxylase (ACC) complex. First, biotin carboxylase catalyzes the carboxylation of biotin on its carrier protein (BCCP) and then the CO(2) group is transferred by the carboxyltransferase to acetyl-CoA to form malonyl-CoA. The polypeptide is Acetyl-coenzyme A carboxylase carboxyl transferase subunit alpha (Cereibacter sphaeroides (strain ATCC 17029 / ATH 2.4.9) (Rhodobacter sphaeroides)).